The following is a 554-amino-acid chain: Arginine--tRNA ligase (554 aa).

The 'HIGH' region signature appears at 132–142 (ANPTGPIHLGG).

It belongs to the class-I aminoacyl-tRNA synthetase family. As to quaternary structure, monomer.

It is found in the cytoplasm. It catalyses the reaction tRNA(Arg) + L-arginine + ATP = L-arginyl-tRNA(Arg) + AMP + diphosphate. The protein is Arginine--tRNA ligase of Clavibacter sepedonicus (Clavibacter michiganensis subsp. sepedonicus).